Consider the following 405-residue polypeptide: Probable tRNA sulfurtransferase (405 aa).

The region spanning 60-165 (AEVDKRLKKV…QDAVYISNQL (106 aa)) is the THUMP domain. Residues 183–184 (ML), 208–209 (HF), Arg-265, Gly-287, and Gln-296 each bind ATP.

This sequence belongs to the ThiI family.

Its subcellular location is the cytoplasm. The enzyme catalyses [ThiI sulfur-carrier protein]-S-sulfanyl-L-cysteine + a uridine in tRNA + 2 reduced [2Fe-2S]-[ferredoxin] + ATP + H(+) = [ThiI sulfur-carrier protein]-L-cysteine + a 4-thiouridine in tRNA + 2 oxidized [2Fe-2S]-[ferredoxin] + AMP + diphosphate. It catalyses the reaction [ThiS sulfur-carrier protein]-C-terminal Gly-Gly-AMP + S-sulfanyl-L-cysteinyl-[cysteine desulfurase] + AH2 = [ThiS sulfur-carrier protein]-C-terminal-Gly-aminoethanethioate + L-cysteinyl-[cysteine desulfurase] + A + AMP + 2 H(+). Its pathway is cofactor biosynthesis; thiamine diphosphate biosynthesis. Functionally, catalyzes the ATP-dependent transfer of a sulfur to tRNA to produce 4-thiouridine in position 8 of tRNAs, which functions as a near-UV photosensor. Also catalyzes the transfer of sulfur to the sulfur carrier protein ThiS, forming ThiS-thiocarboxylate. This is a step in the synthesis of thiazole, in the thiamine biosynthesis pathway. The sulfur is donated as persulfide by IscS. The chain is Probable tRNA sulfurtransferase from Lactobacillus helveticus (strain DPC 4571).